A 729-amino-acid polypeptide reads, in one-letter code: Receptor-like protein 2 (729 aa).

The N-terminal stretch at 1–44 is a signal peptide; sequence MRSKAKGLVRPLITKPVQPLSSHMHLFLLCILFLSALFLTLSEA. Positions 45–82 are N-cap; it reads VCNLQDRESLIWFSGNVSSSVSPLNWNLSIDCCSWEGI. Residues 45-707 lie on the Extracellular side of the membrane; the sequence is VCNLQDRESL…AKENDELNRT (663 aa). Residues Asn60 and Asn71 are each glycosylated (N-linked (GlcNAc...) asparagine). 20 LRR repeats span residues 89–113, 114–137, 139–163, 168–193, 195–219, 220–244, 245–268, 269–292, 293–316, 317–340, 342–364, 365–389, 391–413, 414–437, 439–464, 468–492, 493–515, 516–540, 542–560, and 561–584; these read DSHV…VQNI, HRLS…FFST, DQLM…AFGN, FFSI…VYLQ, TINL…MCRS, SPQL…LGRC, LRLT…IYNL, SELE…ITRL, RKLT…IGNL, SSLR…LANC, KLVK…EFSQ, LQSL…IFSC, SLTA…VLEL, ESLS…SILQ, CRKL…DFLS, FPKL…LINL, NKVE…WLGT, LPDL…LFQL, ALMS…PIFL, and NPNN…IYIR. N-linked (GlcNAc...) asparagine glycans are attached at residues Asn145 and Asn163. Residues Asn202 and Asn205 are each glycosylated (N-linked (GlcNAc...) asparagine). Asn256, Asn267, Asn288, Asn315, Asn330, and Asn339 each carry an N-linked (GlcNAc...) asparagine glycan. An N-linked (GlcNAc...) asparagine glycan is attached at Asn375. An N-linked (GlcNAc...) asparagine glycan is attached at Asn428. Residues Asn564, Asn587, Asn611, Asn622, Asn635, Asn657, and Asn705 are each glycosylated (N-linked (GlcNAc...) asparagine). LRR repeat units lie at residues 599–623, 624–647, and 649–672; these read LKVL…LSNL, TNLE…LTNL, and FLSY…QFDT. The tract at residues 690 to 707 is C-cap/acidic domain; sequence LTSCKPTRAKENDELNRT. Residues 708–728 form a helical membrane-spanning segment; sequence FLMGIAIGYFLSFVSILVVRA. Residue Trp729 is a topological domain, cytoplasmic.

Belongs to the RLP family.

The protein localises to the cell membrane. In terms of biological role, involved in the perception of CLV3 and CLV3-like peptides, that act as extracellular signals regulating meristems maintenance. This Arabidopsis thaliana (Mouse-ear cress) protein is Receptor-like protein 2.